Consider the following 184-residue polypeptide: Photosystem I assembly protein Ycf4 (184 aa).

Helical transmembrane passes span 22–42 (FFWA…GTSS) and 57–77 (IIFF…LFIS).

It belongs to the Ycf4 family.

Its subcellular location is the plastid. It localises to the chloroplast thylakoid membrane. Functionally, seems to be required for the assembly of the photosystem I complex. The chain is Photosystem I assembly protein Ycf4 from Aethionema grandiflorum (Persian stone-cress).